The primary structure comprises 38 residues: Trypsin inhibitor 2 (38 aa).

Glutamine 1 carries the post-translational modification Pyrrolidone carboxylic acid.

Post-translationally, contains disulfide bonds.

Its function is as follows. Inhibits trypsin-like proteases from the guts of the insect pests P.truncatus, P.americana, Acheta sp and Gryllus sp. The polypeptide is Trypsin inhibitor 2 (Opuntia streptacantha (Prickly pear cactus)).